Consider the following 696-residue polypeptide: uncharacterized protein (696 aa).

Transmembrane regions (helical) follow at residues Ile38 to Ala58, Leu107 to Val127, Ala215 to Leu235, Ser245 to Leu265, Thr292 to Leu312, Val329 to Glu349, Phe380 to Ala400, Phe402 to Gly422, Phe433 to Ser453, and Leu457 to Pro477. CBS domains are found at residues Arg527–Ser587 and Ile617–Gly674.

This sequence belongs to the chloride channel (TC 2.A.49) family.

It is found in the membrane. Functionally, voltage-gated chloride channel. This is an uncharacterized protein from Schizosaccharomyces pombe (strain 972 / ATCC 24843) (Fission yeast).